Reading from the N-terminus, the 367-residue chain is Cobalt-precorrin-5B C(1)-methyltransferase (367 aa).

The protein belongs to the CbiD family.

It catalyses the reaction Co-precorrin-5B + S-adenosyl-L-methionine = Co-precorrin-6A + S-adenosyl-L-homocysteine. It functions in the pathway cofactor biosynthesis; adenosylcobalamin biosynthesis; cob(II)yrinate a,c-diamide from sirohydrochlorin (anaerobic route): step 6/10. In terms of biological role, catalyzes the methylation of C-1 in cobalt-precorrin-5B to form cobalt-precorrin-6A. The polypeptide is Cobalt-precorrin-5B C(1)-methyltransferase (Thermosynechococcus vestitus (strain NIES-2133 / IAM M-273 / BP-1)).